We begin with the raw amino-acid sequence, 580 residues long: MDHLIQFWPILKRLIIYAIPWKKKIILAFFLLLSGATSEVLGPILISYFINNILSQHQLNFQLILIIIVIFIMLQILAVFFNYFQSILFNKIAVGIVNKLRNDVMKAALNQPISEFDSQPIGQMISKVTNDTEVIKELYDTVGPTFFRSITLIIIILFAMFTLEWHMAIITIFIIPLVIIVMSIYQYYSTPLLRNVRYYVANINNKFNETINGMNVIQQFRQQTRFENNIKESSELHYLARMKILKLDGFLLRPLLSLLSALVLCSFMFLFSYFSIGVYEVGVLYAFITYLGRLNEPLISITIQQSILQQAIVAGERIFSLIDSPKQKYGNNEEEIKSGKINIKNLSFKYKESGENILNNINIYIPSKSFVAFVGQTGSGKSTLANLLMGYYPIKHGKIYLDDKSINCISHDVLRKNILMVQQDPIVLADTFSSNITLGKKISEEKIWNVLKTVHLSSLVQSMPKGIYSILGEEGNNLSLGQKQLLAIARILVRNPKILILDEATANIDSGTEKLIQTTLSSIRAKTTLVVIAHRLSTVIEADMIVVLKKGKIVELGTHKQLLEKKGFYWKMYNFQLFNC.

In terms of domain architecture, ABC transmembrane type-1 spans 25–310; that stretch reads IILAFFLLLS…ITIQQSILQQ (286 aa). The next 5 membrane-spanning stretches (helical) occupy residues 26 to 46, 61 to 81, 142 to 162, 165 to 185, and 258 to 278; these read ILAFFLLLSGATSEVLGPILI, FQLILIIIVIFIMLQILAVFF, VGPTFFRSITLIIIILFAMFT, WHMAIITIFIIPLVIIVMSIY, and LLSALVLCSFMFLFSYFSIGV. The ABC transporter domain occupies 341-575; the sequence is INIKNLSFKY…KGFYWKMYNF (235 aa). 375 to 382 is a binding site for ATP; sequence GQTGSGKS.

The protein belongs to the ABC transporter superfamily. Drug exporter-2 (TC 3.A.1.117) family.

The protein localises to the cell membrane. The catalysed reaction is ATP + H2O + xenobioticSide 1 = ADP + phosphate + xenobioticSide 2.. In Buchnera aphidicola subsp. Schizaphis graminum (strain Sg), this protein is Multidrug resistance-like ATP-binding protein MdlB (mdlB).